Reading from the N-terminus, the 335-residue chain is Urokinase plasminogen activator surface receptor (335 aa).

An N-terminal signal peptide occupies residues 1–22; that stretch reads MGHPPLLPLLLLLHTCVPASWG. UPAR/Ly6 domains are found at residues 23–114, 115–213, and 214–305; these read LRCM…RSRY, LECI…PQNG, and RQCY…YRSG. 3 disulfide bridges follow: Cys-25–Cys-46, Cys-28–Cys-34, and Cys-39–Cys-67. An N-linked (GlcNAc...) asparagine glycan is attached at Asn-74. Cystine bridges form between Cys-93/Cys-98, Cys-117/Cys-144, Cys-120/Cys-127, Cys-137/Cys-169, Cys-175/Cys-192, Cys-193/Cys-198, Cys-216/Cys-244, Cys-219/Cys-227, Cys-237/Cys-263, Cys-269/Cys-287, and Cys-288/Cys-293. Residues Asn-184, Asn-194, Asn-222, and Asn-255 are each glycosylated (N-linked (GlcNAc...) asparagine). Residue Gly-305 is the site of GPI-anchor amidated glycine attachment. Residues 306–335 constitute a propeptide, removed in mature form; it reads AAPQPGPAHLSLTITLLMTARLWGGTLLWT.

As to quaternary structure, monomer. Interacts with MRC2. Interacts (via the UPAR/Ly6 domains) with SRPX2. Interacts with FAP (seprase); the interaction occurs at the cell surface of invadopodia membrane. Interacts with SORL1 (via N-terminal ectodomain); this interaction decreases PLAUR internalization. The ternary complex composed of PLAUR-PLAU-SERPINE1 also interacts with SORL1. Interacts with CD82; this interaction prevents PLAUR from binding to its high affinity ligand PLAU. As to expression, expressed in neurons of the rolandic area of the brain (at protein level). Expressed in the brain.

The protein resides in the cell membrane. It is found in the cell projection. Its subcellular location is the invadopodium membrane. The protein localises to the secreted. In terms of biological role, acts as a receptor for urokinase plasminogen activator. Plays a role in localizing and promoting plasmin formation. Mediates the proteolysis-independent signal transduction activation effects of U-PA. It is subject to negative-feedback regulation by U-PA which cleaves it into an inactive form. This chain is Urokinase plasminogen activator surface receptor (PLAUR), found in Homo sapiens (Human).